Reading from the N-terminus, the 835-residue chain is Axin-1 (835 aa).

Residues 16-60 (LGSSFTEDAPRPPVPGEEGDLVSSDGRQYNHSFYSSKSDSLKNEA) are disordered. The span at 40 to 53 (DGRQYNHSFYSSKS) shows a compositional bias: polar residues. The region spanning 92-214 (SLHSLLDDQD…LKSDIYLEYT (123 aa)) is the RGS domain. Positions 318–349 (ATSANDSEQQSMSSDADTLSLTDSSVDGVPPY) are disordered. Residues 328 to 344 (SMSSDADTLSLTDSSVD) show a composition bias toward low complexity. Positions 351-436 (YRKPHRREIH…DADISTGPSL (86 aa)) are interaction with GSK3B. The interaction with beta-catenin stretch occupies residues 437-512 (ANHRVPPAVH…SPDGLPAGKI (76 aa)). Disordered regions lie at residues 485–530 (KTPG…QARQ) and 602–627 (GYSSKGSTLSKRPVRKGEDGRNFEMR). Over residues 616–627 (RKGEDGRNFEMR) the composition is skewed to basic and acidic residues. One can recognise a DIX domain in the interval 753-835 (CENITVAYYF…KIIGKVEKVD (83 aa)).

As to quaternary structure, homodimer. Interacts with dixdc1. Interacts with hwa; leading to promote the tankyrase-mediated degradation of axin1. In terms of processing, ADP-ribosylated by tankyrase tnks and tnks2. Poly-ADP-ribosylated protein is recognized by rnf146, followed by ubiquitination at 'Lys-48' and subsequent activation of the Wnt signaling pathway. Post-translationally, ubiquitinated by rnf146 when poly-ADP-ribosylated, leading to its degradation and subsequent activation of the Wnt signaling pathway.

Its subcellular location is the cytoplasm. It is found in the nucleus. The protein localises to the membrane. It localises to the cell membrane. Functionally, component of the beta-catenin destruction complex required for regulating ctnnb1 levels through phosphorylation and ubiquitination, and modulating Wnt-signaling. Controls dorsoventral patterning via two opposing effects: down-regulates ctnnb1 to inhibit the Wnt signaling pathway and ventralize embryos, but also dorsalizes embryos by activating a Wnt-independent JNK signaling pathway. This chain is Axin-1 (axin1), found in Danio rerio (Zebrafish).